The sequence spans 439 residues: O-fucosyltransferase 13 (439 aa).

Residues 8–28 traverse the membrane as a helical; Signal-anchor for type II membrane protein segment; that stretch reads PLFVFVLTFSLLLVVILLSPS. Asn-104 and Asn-119 each carry an N-linked (GlcNAc...) asparagine glycan. Position 238 to 240 (238 to 240) interacts with substrate; the sequence is HLR. Asn-293 carries N-linked (GlcNAc...) asparagine glycosylation.

The protein belongs to the glycosyltransferase GT106 family.

It localises to the membrane. It functions in the pathway glycan metabolism. The protein is O-fucosyltransferase 13 of Arabidopsis thaliana (Mouse-ear cress).